The primary structure comprises 221 residues: MNNTVLILKNISKHYSQGKTIVRVLDDLNLTVNEGELIAIIGSSGSGKSTLLHIAGLLDKPTNGQVIIPNSKYQKYHLIRLHYLGFIYQQHHLLKDFTALENVIMPRLISGLDQKEAIEDATKILDDLGLGKKLYNMPGELSGGEQQRVAIARSLINKPKIILADEPTGNLDPKTTNEVFNLFLKVAREQNTAVIMVTHNHELAHKMDKLYKLKHGLLNIA.

Residues leucine 6–isoleucine 220 enclose the ABC transporter domain. Residue glycine 42–serine 49 participates in ATP binding.

It belongs to the ABC transporter superfamily. Lipoprotein translocase (TC 3.A.1.125) family. In terms of assembly, the complex is composed of two ATP-binding proteins (LolD) and two transmembrane proteins (LolC and LolE).

It is found in the cell inner membrane. Its function is as follows. Part of the ABC transporter complex LolCDE involved in the translocation of mature outer membrane-directed lipoproteins, from the inner membrane to the periplasmic chaperone, LolA. Responsible for the formation of the LolA-lipoprotein complex in an ATP-dependent manner. This Rickettsia felis (strain ATCC VR-1525 / URRWXCal2) (Rickettsia azadi) protein is Lipoprotein-releasing system ATP-binding protein LolD.